The primary structure comprises 337 residues: Neurogenic differentiation factor 6 (337 aa).

The disordered stretch occupies residues 43-82; the sequence is LRGKSIKRAPGEETEKEEEEEDREEEDENGLPRRRGLRKK. Positions 54–71 are enriched in acidic residues; that stretch reads EETEKEEEEEDREEEDEN. A Nuclear localization signal motif is present at residues 80 to 86; that stretch reads RKKKTTK. Residues 94–146 form the bHLH domain; that stretch reads FRRQEANARERNRMHGLNDALDNLRKVVPCYSKTQKLSKIETLRLAKNYIWAL.

Efficient DNA binding requires dimerization with another bHLH protein.

The protein localises to the nucleus. Functionally, activates E box-dependent transcription in collaboration with TCF3/E47. May be a trans-acting factor involved in the development and maintenance of the mammalian nervous system. Transactivates the promoter of its own gene. This is Neurogenic differentiation factor 6 (NEUROD6) from Bos taurus (Bovine).